We begin with the raw amino-acid sequence, 164 residues long: Crossover junction endodeoxyribonuclease RuvC (164 aa).

Catalysis depends on residues Asp-7, Glu-67, and Asp-140. Residues Asp-7, Glu-67, and Asp-140 each coordinate Mg(2+).

It belongs to the RuvC family. Homodimer which binds Holliday junction (HJ) DNA. The HJ becomes 2-fold symmetrical on binding to RuvC with unstacked arms; it has a different conformation from HJ DNA in complex with RuvA. In the full resolvosome a probable DNA-RuvA(4)-RuvB(12)-RuvC(2) complex forms which resolves the HJ. Mg(2+) is required as a cofactor.

The protein localises to the cytoplasm. It catalyses the reaction Endonucleolytic cleavage at a junction such as a reciprocal single-stranded crossover between two homologous DNA duplexes (Holliday junction).. The RuvA-RuvB-RuvC complex processes Holliday junction (HJ) DNA during genetic recombination and DNA repair. Endonuclease that resolves HJ intermediates. Cleaves cruciform DNA by making single-stranded nicks across the HJ at symmetrical positions within the homologous arms, yielding a 5'-phosphate and a 3'-hydroxyl group; requires a central core of homology in the junction. The consensus cleavage sequence is 5'-(A/T)TT(C/G)-3'. Cleavage occurs on the 3'-side of the TT dinucleotide at the point of strand exchange. HJ branch migration catalyzed by RuvA-RuvB allows RuvC to scan DNA until it finds its consensus sequence, where it cleaves and resolves the cruciform DNA. This is Crossover junction endodeoxyribonuclease RuvC from Alkaliphilus metalliredigens (strain QYMF).